Consider the following 911-residue polypeptide: DNA polymerase I (911 aa).

A 5'-3' exonuclease domain is found at 186 to 280 (VTPAQYPDLA…DTLRLQPWDR (95 aa)). The 3'-5' exonuclease domain maps to 320–497 (RGGLLESGTV…LAAALDAELD (178 aa)).

It belongs to the DNA polymerase type-A family. As to quaternary structure, single-chain monomer with multiple functions.

It carries out the reaction DNA(n) + a 2'-deoxyribonucleoside 5'-triphosphate = DNA(n+1) + diphosphate. Functionally, in addition to polymerase activity, this DNA polymerase exhibits 3'-5' and 5'-3' exonuclease activity. The sequence is that of DNA polymerase I (polA) from Mycobacterium leprae (strain TN).